The sequence spans 460 residues: Flavonol 3-O-glucosyltransferase (460 aa).

Catalysis depends on His-23, which acts as the Proton acceptor. Residues His-23 and Gln-88 each contribute to the an anthocyanidin site. Asp-123 serves as the catalytic Charge relay. Thr-145 is a UDP-alpha-D-glucose binding site. His-154 contacts an anthocyanidin. UDP-alpha-D-glucose is bound by residues Ala-339, Gln-341, His-356, Trp-359, Asn-360, Ser-361, and Glu-364. Gly-379 contributes to the an anthocyanidin binding site. UDP-alpha-D-glucose is bound by residues Asp-380 and Gln-381.

This sequence belongs to the UDP-glycosyltransferase family.

It catalyses the reaction a flavonol + UDP-alpha-D-glucose = a flavonol 3-O-beta-D-glucoside + UDP + H(+). It carries out the reaction quercetin + UDP-alpha-D-glucose = quercetin 3-O-beta-D-glucoside + UDP + H(+). It functions in the pathway flavonoid metabolism. Its function is as follows. Flavonol 3-O-glucosyltransferase that catalyzes the transfer of glucose from UDP-glucose to the 3-OH position of quercetin and kaempferol. Possesses high quercetin 3-O-glucosyltransferase activity in vitro. Catalyzes the glycosylation of anthocyanins from UDP-glucose. Also active in vitro on benzoates and benzoate derivatives. This chain is Flavonol 3-O-glucosyltransferase, found in Arabidopsis thaliana (Mouse-ear cress).